We begin with the raw amino-acid sequence, 59 residues long: Potassium channel toxin alpha-KTx 1.14 (59 aa).

An N-terminal signal peptide occupies residues 1-22 (MKKISFLLLLAIVICSIGWTDG). Pyrrolidone carboxylic acid is present on Gln-23. 3 disulfides stabilise this stretch: Cys-29-Cys-50, Cys-35-Cys-55, and Cys-39-Cys-57.

This sequence belongs to the short scorpion toxin superfamily. Potassium channel inhibitor family. Alpha-KTx 01 subfamily. As to expression, expressed by the venom gland.

The protein resides in the secreted. Its function is as follows. Potent blocker of both large-conductance calcium-activated potassium channels (KCa1.1/KCNMA1) and voltage-gated potassium channels (Kv1.3/KCNA3 and ERG1/Kv11.1/KCNH2). This chain is Potassium channel toxin alpha-KTx 1.14, found in Olivierus martensii (Manchurian scorpion).